The sequence spans 363 residues: 3-isopropylmalate dehydrogenase A (363 aa).

Residue 78-89 (GPKWGTGAVRPE) coordinates NAD(+). The substrate site is built by R96, R106, R135, and D222. Residues D222, D247, and D251 each coordinate Mg(2+). 287–299 (GSAPDIAGKGIVN) is a binding site for NAD(+).

Belongs to the isocitrate and isopropylmalate dehydrogenases family. In terms of assembly, homodimer. Mg(2+) serves as cofactor. The cofactor is Mn(2+).

It is found in the cytoplasm. The catalysed reaction is (2R,3S)-3-isopropylmalate + NAD(+) = 4-methyl-2-oxopentanoate + CO2 + NADH. It participates in amino-acid biosynthesis; L-leucine biosynthesis; L-leucine from 3-methyl-2-oxobutanoate: step 3/4. Its function is as follows. Catalyzes the oxidation of 3-carboxy-2-hydroxy-4-methylpentanoate (3-isopropylmalate) to 3-carboxy-4-methyl-2-oxopentanoate. The product decarboxylates to 4-methyl-2 oxopentanoate. The polypeptide is 3-isopropylmalate dehydrogenase A (leu2A) (Aspergillus niger).